The primary structure comprises 431 residues: Enolase (431 aa).

Glutamine 163 serves as a coordination point for (2R)-2-phosphoglycerate. Glutamate 205 acts as the Proton donor in catalysis. Aspartate 242, glutamate 288, and aspartate 315 together coordinate Mg(2+). (2R)-2-phosphoglycerate-binding residues include lysine 340, arginine 369, serine 370, and lysine 391. The active-site Proton acceptor is lysine 340.

It belongs to the enolase family. Mg(2+) is required as a cofactor.

It is found in the cytoplasm. The protein resides in the secreted. Its subcellular location is the cell surface. The catalysed reaction is (2R)-2-phosphoglycerate = phosphoenolpyruvate + H2O. It functions in the pathway carbohydrate degradation; glycolysis; pyruvate from D-glyceraldehyde 3-phosphate: step 4/5. Functionally, catalyzes the reversible conversion of 2-phosphoglycerate (2-PG) into phosphoenolpyruvate (PEP). It is essential for the degradation of carbohydrates via glycolysis. In Bacillus cereus (strain B4264), this protein is Enolase.